We begin with the raw amino-acid sequence, 339 residues long: Protein FAM76B (339 aa).

Alanine 2 carries the N-acetylalanine modification. Phosphoserine is present on residues serine 22 and serine 148. The interval 144–243 (EQRKSLGSSH…INQSADSGGT (100 aa)) is disordered. Residues 148-160 (SLGSSHSNSSSSS) are compositionally biased toward low complexity. The segment covering 167–189 (HHSKHHHHHHHHHHRHSSGHHKV) has biased composition (basic residues). Position 193 is a phosphoserine (serine 193). Threonine 215 bears the Phosphothreonine mark. Basic and acidic residues predominate over residues 215 to 224 (TPKKKPKLES). Over residues 228-243 (NGDSSSINQSADSGGT) the composition is skewed to polar residues. The stretch at 248–328 (LISQLKEEVM…QVAALSKGKK (81 aa)) forms a coiled coil.

The protein belongs to the FAM76 family. In terms of assembly, interacts with HNRNPA2B1 (via C-terminus); the interaction results in retention of HNRNPA2B1 in the nucleus and inhibition of the NF-kappa-B-mediated inflammatory pathway.

Its subcellular location is the nucleus speckle. In terms of biological role, negatively regulates the NF-kappa-B-mediated inflammatory pathway by preventing the translocation of HNRNPA2B1 from the nucleus to the cytoplasm. Inhibits the PI3K/Akt/NF-kappa-B pathway-mediated polarization of M1 macrophages by binding to and stabilizing PIK3CD mRNA, resulting in increased levels of PIK3CD protein and increased levels of phosphorylated downstream target AKT which leads to decreased NF-kappa-B signaling. The polypeptide is Protein FAM76B (Fam76b) (Mus musculus (Mouse)).